Consider the following 327-residue polypeptide: MTISFKGLARGVACAALVLAALPAAAKEFRLGLITPPPHTWTKAAEAFGAELSEKSGGAHSVSVFPARQLGNEAQMLQQLQTGALDMAFMTVAEVSNRVPNMGAFYAPYLAGDINHAAAILRSDTARGMLAVLPQEAGVVGVGFGSAGMRQILSRGAVNSAADLSGLKLRITPFDPILDFYNALGAAPTPMPLPAVYDALANGQVDAIDMDVELINVLKYHEHADTILISNHMMFPMVGLISARVYAGMSDADKAMISELMAKHVDSTLDVYMVKEPEWTDALTKVGKTFKRVDQSFFGDAIAQWETIWADKAPSLPELRKTAADLQ.

Positions 1–26 are cleaved as a signal peptide; it reads MTISFKGLARGVACAALVLAALPAAA. Residues 39 to 41, arginine 150, 170 to 172, and aspartate 211 contribute to the 3-hydroxybenzoate site; these read HTW and RIT.

This sequence belongs to the bacterial solute-binding protein 7 family. In terms of assembly, the complex is comprised of an extracytoplasmic solute-binding protein and a heteromeric permease formed by two transmembrane proteins.

The protein resides in the periplasm. Its function is as follows. Solute-binding protein that binds 3,4-dihydroxybenzoate and 3-hydroxybenzoate (in vitro). Probably part of a tripartite ATP-independent periplasmic (TRAP) transport system that mediates solute transport into the cytoplasm. This is Solute-binding protein SPO1773 from Ruegeria pomeroyi (strain ATCC 700808 / DSM 15171 / DSS-3) (Silicibacter pomeroyi).